Reading from the N-terminus, the 708-residue chain is Leukotoxin translocation ATP-binding protein LktB (708 aa).

Residues 1-126 enclose the Peptidase C39 domain; that stretch reads MEANHQRNDL…ACYQGQLILV (126 aa). The region spanning 155–437 is the ABC transmembrane type-1 domain; it reads FLETLIVSIF…LAQLWQDFQQ (283 aa). A run of 5 helical transmembrane segments spans residues 159–179, 192–212, 270–290, 296–316, and 389–409; these read LIVS…FQVV, LNII…LSGL, ALTS…MWYY, LVIL…SPIL, and VMVI…LSIG. The region spanning 469-704 is the ABC transporter domain; sequence ISFKNIRFRY…SNGLYSYLHQ (236 aa). 503–510 contacts ATP; sequence GRSGSGKS.

The protein belongs to the ABC transporter superfamily. Protein-1 exporter (TC 3.A.1.109) family. In terms of assembly, homodimer.

It is found in the cell inner membrane. It catalyses the reaction ATP + H2O + proteinSide 1 = ADP + phosphate + proteinSide 2.. Part of the ABC transporter complex LktBD involved in leukotoxin export. Transmembrane domains (TMD) form a pore in the inner membrane and the ATP-binding domain (NBD) is responsible for energy generation. This Mannheimia haemolytica (Pasteurella haemolytica) protein is Leukotoxin translocation ATP-binding protein LktB (lktB).